We begin with the raw amino-acid sequence, 479 residues long: Glycogen synthase (479 aa).

Lysine 15 lines the ADP-alpha-D-glucose pocket.

The protein belongs to the glycosyltransferase 1 family. Bacterial/plant glycogen synthase subfamily.

The enzyme catalyses [(1-&gt;4)-alpha-D-glucosyl](n) + ADP-alpha-D-glucose = [(1-&gt;4)-alpha-D-glucosyl](n+1) + ADP + H(+). It participates in glycan biosynthesis; glycogen biosynthesis. Synthesizes alpha-1,4-glucan chains using ADP-glucose. The sequence is that of Glycogen synthase from Pectobacterium atrosepticum (strain SCRI 1043 / ATCC BAA-672) (Erwinia carotovora subsp. atroseptica).